Reading from the N-terminus, the 1876-residue chain is Phenolphthiocerol/phthiocerol polyketide synthase subunit A (1876 aa).

The residue at position 2 (threonine 2) is an N-acetylthreonine. One can recognise a Carrier 1 domain in the interval 9–83 (ADLRHWLIDY…ALAAYLAAPE (75 aa)). The residue at position 43 (serine 43) is an O-(pantetheine 4'-phosphoryl)serine. In terms of domain architecture, Ketosynthase family 3 (KS3) spans 101 to 526 (DEPIAVVGMG…GTNAHVVIEQ (426 aa)). Active-site for beta-ketoacyl synthase activity residues include cysteine 273, histidine 408, and histidine 448. Positions 626-950 (SPGPGTVFVY…NLNKAHTIHP (325 aa)) are acyltransferase. Residue serine 720 is the For malonyltransferase activity of the active site. The tract at residues 997–1112 (HTTVATVSAS…AQLSSSPSDS (116 aa)) is N-terminal hotdog fold. Positions 997–1267 (HTTVATVSAS…YRALDFGLDV (271 aa)) constitute a PKS/mFAS DH domain. Histidine 1027 acts as the Proton acceptor; for dehydratase activity in catalysis. A disordered region spans residues 1102 to 1130 (TAQLSSSPSDSASSLNEHHRANGQPPERA). Residues 1106–1115 (SSSPSDSASS) are compositionally biased toward low complexity. Positions 1130 to 1267 (AHRDLIPDLA…YRALDFGLDV (138 aa)) are C-terminal hotdog fold. The active-site Proton donor; for dehydratase activity is the aspartate 1186. 1491 to 1551 (AAYLITGGLG…RRRIDAIRAL (61 aa)) is a binding site for NADP(+). The beta-ketoacyl reductase stretch occupies residues 1491–1728 (AAYLITGGLG…DGYDVAQAVV (238 aa)). Residues 1759–1836 (EVRSELEQGL…SLASYLAKRV (78 aa)) enclose the Carrier 2 domain. At serine 1796 the chain carries O-(pantetheine 4'-phosphoryl)serine.

It depends on NADP(+) as a cofactor. The cofactor is pantetheine 4'-phosphate.

It carries out the reaction icosanoyl-[(phenol)carboxyphthiodiolenone synthase] + 2 (S)-methylmalonyl-CoA + 3 malonyl-CoA + 5 NADPH + 10 H(+) = C32-carboxyphthiodiolenone-[(phenol)carboxyphthiodiolenone synthase] + 5 CO2 + 5 NADP(+) + 5 CoA + 2 H2O. The enzyme catalyses docosanoyl-[(phenol)carboxyphthiodiolenone synthase] + 2 (S)-methylmalonyl-CoA + 3 malonyl-CoA + 5 NADPH + 10 H(+) = C34-carboxyphthiodiolenone-[(phenol)carboxyphthiodiolenone synthase] + 5 CO2 + 5 NADP(+) + 5 CoA + 2 H2O. The catalysed reaction is 17-(4-hydroxyphenyl)heptadecanoyl-[(phenol)carboxyphthiodiolenone synthase] + 2 (S)-methylmalonyl-CoA + 3 malonyl-CoA + 5 NADPH + 10 H(+) = C35-(phenol)carboxyphthiodiolenone-[(phenol)carboxyphthiodiolenone synthase] + 5 CO2 + 5 NADP(+) + 5 CoA + 2 H2O. It catalyses the reaction 19-(4-hydroxyphenyl)nonadecanoyl-[(phenol)carboxyphthiodiolenone synthase] + 2 (S)-methylmalonyl-CoA + 3 malonyl-CoA + 5 NADPH + 10 H(+) = C37-(phenol)carboxyphthiodiolenone-[(phenol)carboxyphthiodiolenone synthase] + 5 CO2 + 5 NADP(+) + 5 CoA + 2 H2O. The protein operates within lipid metabolism; fatty acid biosynthesis. Its function is as follows. Part of the PpsABCDE complex involved in the biosynthesis of the lipid core common to phthiocerols and phenolphthiocerols by successive additions of malonyl-CoA or methylmalonyl-CoA extender units. PpsA can accept as substrate the activated forms of either icosanoyl (C20), docosanoyl (C22) or lignoceroyl (C24) groups from FadD26, or a (4-hydroxyphenyl)-C17 or (4-hydroxyphenyl)-C19 fatty acyl from FadD29. PpsA initiates the biosynthesis and extends its substrate using a malonyl-CoA extender unit. The PpsB and PpsC proteins add the second and third malonyl-CoA extender units. PpsD adds an (R)-methylmalonyl unit and PpsE adds a second (R)-methylmalonyl unit. The incorporation of the methylmalonyl units results in formation of two branched methyl groups in the elongated product. The protein is Phenolphthiocerol/phthiocerol polyketide synthase subunit A (ppsA) of Mycobacterium tuberculosis (strain ATCC 25618 / H37Rv).